The primary structure comprises 1025 residues: MGGGKNVRRGLEPLEFEECIVDSPDFRENLNRHEKELDHTSHQIKRIIKEVKDLMSAAKILSTRMKQLAILLNDFNFECIGTAQTDDENVICESLKRFGAIIGNIEDEREKMLTLADKHIIESLEDFRKKQIGGVKENKKKFDKKTEKFCQSQERFLNMSTKKPENTIQEADASLGMHEREYIQESLSYVLRIQEVQERIKFEFVEILLAFISGWLVFYHTAHEQAEDHRDYLQDLRHKVQKTRENFEEAREKVTELKTKYMEKRTKPEEIFTKRGYLFLMEKSSILKISLLEPFKATWTKYYCTFKKQKREFTMLQFNQMNHNFTRPEARDDEKLTLFSCQRRASEFEKRFCFDLTFKEKPGVVYTFQALSEKDHRYWISAMDGTEPTYLAPGKIKVSEAYHLDEAGFMFIRRCIQVLEIRGLEDEGIYRKSGVGTKISKLLALGLNQKESDDVFVDDKYRDLMESNTIASALKMYLRNLNEPLMTYQYHSDFIEAAKQETLNQRVNEVHKLVYKLPQPNFQMLDMVICHLTDVSRKYEKNKMSVFNLGVVFGPTLLRPREESVAAILDIKFNNIVINILIDNYERIFKNKPSADIKLPDATKAPSIMYPSRSSPPTRMPRASQIGKAASTGAMGSSSNTAGNPMFLNQQKIYRVVSKTNCTEPTMSSSLQNIPNGDNYALGSNAMNSSGGAQCISLSPPMHMLNGILSPTIGSINNLHTISKNETSTRRYVPDTEIAPDYGIIGANNGGVTLQSHHAVPVSSTSNFRHPEYLMTTANPVTQSGSSSHIYTNTSSAGANSSNRISLSNVSPPNTAMRKERFLGSASGPQQHPPVQRGLHSYGQTKHYSPLMPTSTSSSNDSVCDSLSSNNGLGSSIVANSGNSGNVAQHLSARNTNDYALISSQNSSLSPHLGPTCDEVVTATTLPSVSLSCGGTASESTEYPPSKMHRNRDVNQIKRDLSTGTARVRTLYACMGESEGELSFEPNQIITNVRYSHEPGWLQGTLNGKTGLIPENYVEHLKPHH.

The PH domain occupies 271-388 (IFTKRGYLFL…WISAMDGTEP (118 aa)). A Rho-GAP domain is found at 402-589 (YHLDEAGFMF…ILIDNYERIF (188 aa)). The tract at residues 824–866 (GSASGPQQHPPVQRGLHSYGQTKHYSPLMPTSTSSSNDSVCDS) is disordered. Residues 854–866 (TSTSSSNDSVCDS) show a composition bias toward low complexity. The SH3 domain occupies 963 to 1023 (TGTARVRTLY…PENYVEHLKP (61 aa)).

Interacts with Egfr (when ubiquitinated). As to expression, in the adult brain, expressed in the antennal lobe, the subesophageal ganglion and the alpha/beta neurons of the mushroom body.

The protein localises to the cytoplasm. It localises to the cytosol. Its subcellular location is the cytoplasmic vesicle. Its function is as follows. GTPase-activating protein for Rho family proteins. Essential component of the CLIC (clathrin-independent carrier)/GEEC (GPI-anchored protein-enriched early endocytic compartment) endocytic pathway. During hematopoiesis, inhibits Egfr-ras-MAPK signaling by promoting Spi-induced Egfr internalization through CLIC/GEEC endocytosis, thereby preventing plasmatocyte overproliferation. Essential for normal mushroom body (MB) development and consequently the formation of olfactory long-term memories. During MD development, required to stop the MB beta-lobe from crossing the brain midline, possibly acting via its role in the CLIC/GEEC endocytic pathway to down-regulate the Egfr-ras-MAPK signaling at the tip of the beta-lobes. Required during embryo cellularization for maintaining and regulating the rate of actomyosin ring constriction. During cellularization, inhibits Rho-GTP levels at the furrow canal tip in a spatiotemporal manner, thus delaying the onset of actomyosin contraction and ensuring appropriate closure of the cells at the base of nuclei after membrane extension. The protein is Rho GTPase-activating protein Graf of Drosophila melanogaster (Fruit fly).